We begin with the raw amino-acid sequence, 126 residues long: Aspartate 1-decarboxylase (126 aa).

Residue serine 25 is the Schiff-base intermediate with substrate; via pyruvic acid of the active site. Serine 25 carries the post-translational modification Pyruvic acid (Ser). Residue threonine 57 coordinates substrate. The active-site Proton donor is the tyrosine 58. A substrate-binding site is contributed by 73–75; that stretch reads GGA.

Belongs to the PanD family. As to quaternary structure, heterooctamer of four alpha and four beta subunits. The cofactor is pyruvate. Post-translationally, is synthesized initially as an inactive proenzyme, which is activated by self-cleavage at a specific serine bond to produce a beta-subunit with a hydroxyl group at its C-terminus and an alpha-subunit with a pyruvoyl group at its N-terminus.

It localises to the cytoplasm. The enzyme catalyses L-aspartate + H(+) = beta-alanine + CO2. It functions in the pathway cofactor biosynthesis; (R)-pantothenate biosynthesis; beta-alanine from L-aspartate: step 1/1. Its function is as follows. Catalyzes the pyruvoyl-dependent decarboxylation of aspartate to produce beta-alanine. This Acinetobacter baumannii (strain AB307-0294) protein is Aspartate 1-decarboxylase.